Reading from the N-terminus, the 402-residue chain is N-acetyltransferase Eis (402 aa).

Positions 3-154 (VTLCSPTEDD…RFARFHADAP (152 aa)) constitute an N-acetyltransferase domain. Acetyl-CoA contacts are provided by residues 85–87 (VAV), 93–98 (RRGLLR), and 121–122 (SE). The active-site Proton donor is tyrosine 126. Residue phenylalanine 402 is the Proton acceptor; via carboxylate of the active site.

Belongs to the acetyltransferase Eis family. In terms of assembly, homohexamer; trimer of dimers.

Its subcellular location is the secreted. The protein resides in the host cytoplasmic vesicle. The protein localises to the host phagosome. It is found in the extracellular vesicle. It localises to the bacterial extracellular vesicle. Its subcellular location is the host extracellular space. The catalysed reaction is L-lysyl-[protein] + acetyl-CoA = N(6)-acetyl-L-lysyl-[protein] + CoA + H(+). Functionally, effector that is released into the host cell and affects host immune responses. Acts as an acetyltransferase that acetylates lysine residues of host proteins. The polypeptide is N-acetyltransferase Eis (Mycobacterium bovis (strain ATCC BAA-935 / AF2122/97)).